We begin with the raw amino-acid sequence, 258 residues long: Synapse differentiation-inducing gene protein 1 (258 aa).

The Cytoplasmic portion of the chain corresponds to 1-181 (MDGIVEQKSV…NFLMMPPRDH (181 aa)). Residue Ser137 is modified to Phosphoserine. A helical membrane pass occupies residues 182–202 (LGLSVFSMLCCFWPLGIAAFY). Residues 203–228 (LSHETNKAVAKGDFHQASTSSRRALF) are Extracellular-facing. Positions 229–249 (LAVLSITIGTGIYVGVAVALI) form an intramembrane region, helical. Residues 250-258 (AYLSKNNHL) lie on the Extracellular side of the membrane.

The protein belongs to the CD225/Dispanin family. As to quaternary structure, homodimer. Interacts with GRIA1 and GRIA2. In terms of tissue distribution, enriched in the cerebellum and also expressed in the neocortex and modestly in the hippocampus (at protein level). Expressed in hippocampal neurons, both in cell body and neurites, however its presence is enriched at excitatory synapses and also found in postsynaptic cells.

It localises to the cell membrane. Its subcellular location is the early endosome membrane. It is found in the postsynaptic density membrane. The protein localises to the synapse. The protein resides in the cell projection. It localises to the dendrite. Its subcellular location is the dendritic spine. May regulate AMPA receptor content at nascent synapses, and have a role in postsynaptic development and maturation. The sequence is that of Synapse differentiation-inducing gene protein 1 (Syndig1) from Rattus norvegicus (Rat).